Here is a 99-residue protein sequence, read N- to C-terminus: Ribosomal processing cysteine protease Prp (99 aa).

His-16 (proton donor) is an active-site residue. Catalysis depends on Cys-28, which acts as the Nucleophile.

It belongs to the Prp family. In terms of assembly, homodimer.

An essential cysteine protease that cleaves the N-terminus from ribosomal protein bL27. In Mycoplasma genitalium (strain ATCC 33530 / DSM 19775 / NCTC 10195 / G37) (Mycoplasmoides genitalium), this protein is Ribosomal processing cysteine protease Prp.